Reading from the N-terminus, the 932-residue chain is Lipoxygenase 2.2, chloroplastic (932 aa).

The 141-residue stretch at 79-219 folds into the PLAT domain; it reads MKATVSVHMK…CSPDKRTFFP (141 aa). The region spanning 223–932 is the Lipoxygenase domain; the sequence is SYIPSQTPKG…EMGIPNSISI (710 aa). Basic and acidic residues predominate over residues 270-284; sequence PESKRPVLGGKEHPY. Positions 270 to 311 are disordered; the sequence is PESKRPVLGGKEHPYPRRCRTGRPRSKTDPSSEEESHKKGEM. Basic residues predominate over residues 285–294; the sequence is PRRCRTGRPR. A compositionally biased stretch (basic and acidic residues) spans 295–311; it reads SKTDPSSEEESHKKGEM. 5 residues coordinate Fe cation: His-588, His-593, His-778, Asn-782, and Ile-932.

Belongs to the lipoxygenase family. Fe cation is required as a cofactor.

The protein resides in the plastid. The protein localises to the chloroplast. The enzyme catalyses (9Z,12Z)-octadecadienoate + O2 = (13S)-hydroperoxy-(9Z,11E)-octadecadienoate. It carries out the reaction (9Z,12Z,15Z)-octadecatrienoate + O2 = (13S)-hydroperoxy-(9Z,11E,15Z)-octadecatrienoate. It participates in lipid metabolism; oxylipin biosynthesis. In terms of biological role, plant lipoxygenase may be involved in a number of diverse aspects of plant physiology including growth and development, pest resistance, and senescence or responses to wounding. This enzyme exhibits linoleate 13-lipoxygenase activity. This Hordeum vulgare (Barley) protein is Lipoxygenase 2.2, chloroplastic (LOX2.2).